A 275-amino-acid polypeptide reads, in one-letter code: Voltage-dependent calcium channel gamma-5 subunit (275 aa).

Transmembrane regions (helical) follow at residues 8–28 (ALTLLSSVFAVCGLGLLGIAV), 103–123 (FPLVSLFFMFIGFILNNIGHI), 129–149 (ILAFVSGIFFILSGLSLVVGL), and 176–196 (GWSFAFAAISFLLTESAGVMS).

It belongs to the PMP-22/EMP/MP20 family. CACNG subfamily. As to quaternary structure, the L-type calcium channel is composed of five subunits: alpha-1, alpha-2/delta, beta and gamma. Acts as an auxiliary subunit for AMPA-selective glutamate receptors (AMPARs). Found in a complex with GRIA1, GRIA2, GRIA3, GRIA4, CNIH2, CNIH3, CACNG2, CACNG3, CACNG4, CACNG7 and CACNG8. Interacts with GRIA1, GRIA2, GRIA3 and GRIA4.

It is found in the membrane. It localises to the postsynaptic density membrane. Functionally, regulates the gating properties of AMPA-selective glutamate receptors (AMPARs). Modulates their gating properties by accelerating their rates of activation, deactivation and desensitization. Displays subunit-specific AMPA receptor regulation. Shows specificity for GRIA1, GRIA4 and the long isoform of GRIA2. Thought to stabilize the calcium channel in an inactivated (closed) state. In Homo sapiens (Human), this protein is Voltage-dependent calcium channel gamma-5 subunit (CACNG5).